An 878-amino-acid chain; its full sequence is DNA mismatch repair protein MutS (878 aa).

626–633 contributes to the ATP binding site; the sequence is GPNMAGKS.

It belongs to the DNA mismatch repair MutS family.

This protein is involved in the repair of mismatches in DNA. It is possible that it carries out the mismatch recognition step. This protein has a weak ATPase activity. This chain is DNA mismatch repair protein MutS, found in Paracoccus denitrificans (strain Pd 1222).